The following is an 868-amino-acid chain: Translation initiation factor IF-2 (868 aa).

Disordered stretches follow at residues 158–178 (VKEE…DELT) and 200–269 (KKEE…KYRE). Basic and acidic residues predominate over residues 200–209 (KKEEVKPEKV). The span at 249-260 (RGGRSKFKKKKG) shows a compositional bias: basic residues. Residues 368–537 (GRAPVVTIMG…LLQSEVLELK (170 aa)) enclose the tr-type G domain. The interval 377-384 (GHVDHGKT) is G1. 377 to 384 (GHVDHGKT) lines the GTP pocket. The G2 stretch occupies residues 402–406 (GITQH). The tract at residues 423-426 (DTPG) is G3. GTP contacts are provided by residues 423 to 427 (DTPGH) and 477 to 480 (NKMD). Residues 477-480 (NKMD) are G4. The segment at 513 to 515 (SAK) is G5.

This sequence belongs to the TRAFAC class translation factor GTPase superfamily. Classic translation factor GTPase family. IF-2 subfamily.

The protein resides in the cytoplasm. In terms of biological role, one of the essential components for the initiation of protein synthesis. Protects formylmethionyl-tRNA from spontaneous hydrolysis and promotes its binding to the 30S ribosomal subunits. Also involved in the hydrolysis of GTP during the formation of the 70S ribosomal complex. This Legionella pneumophila (strain Lens) protein is Translation initiation factor IF-2.